A 371-amino-acid chain; its full sequence is Probable dual-specificity RNA methyltransferase RlmN (371 aa).

Catalysis depends on E114, which acts as the Proton acceptor. Positions 120-346 (DGPRRSICVS…ESAGVNVNFR (227 aa)) constitute a Radical SAM core domain. A disulfide bond links C127 and C357. The [4Fe-4S] cluster site is built by C134, C138, and C141. S-adenosyl-L-methionine-binding positions include 183-184 (GE), S215, 238-240 (SLH), and N314. C357 (S-methylcysteine intermediate) is an active-site residue.

Belongs to the radical SAM superfamily. RlmN family. The cofactor is [4Fe-4S] cluster.

The protein localises to the cytoplasm. The enzyme catalyses adenosine(2503) in 23S rRNA + 2 reduced [2Fe-2S]-[ferredoxin] + 2 S-adenosyl-L-methionine = 2-methyladenosine(2503) in 23S rRNA + 5'-deoxyadenosine + L-methionine + 2 oxidized [2Fe-2S]-[ferredoxin] + S-adenosyl-L-homocysteine. It catalyses the reaction adenosine(37) in tRNA + 2 reduced [2Fe-2S]-[ferredoxin] + 2 S-adenosyl-L-methionine = 2-methyladenosine(37) in tRNA + 5'-deoxyadenosine + L-methionine + 2 oxidized [2Fe-2S]-[ferredoxin] + S-adenosyl-L-homocysteine. In terms of biological role, specifically methylates position 2 of adenine 2503 in 23S rRNA and position 2 of adenine 37 in tRNAs. The sequence is that of Probable dual-specificity RNA methyltransferase RlmN from Rhodopirellula baltica (strain DSM 10527 / NCIMB 13988 / SH1).